Consider the following 335-residue polypeptide: Phosphate acyltransferase (335 aa).

This sequence belongs to the PlsX family. As to quaternary structure, homodimer. Probably interacts with PlsY.

The protein localises to the cytoplasm. The enzyme catalyses a fatty acyl-[ACP] + phosphate = an acyl phosphate + holo-[ACP]. The protein operates within lipid metabolism; phospholipid metabolism. Functionally, catalyzes the reversible formation of acyl-phosphate (acyl-PO(4)) from acyl-[acyl-carrier-protein] (acyl-ACP). This enzyme utilizes acyl-ACP as fatty acyl donor, but not acyl-CoA. The protein is Phosphate acyltransferase of Streptococcus equi subsp. zooepidemicus (strain H70).